Here is a 334-residue protein sequence, read N- to C-terminus: Formamidase (334 aa).

A CN hydrolase domain is found at phenylalanine 14–proline 260. Glutamate 60 serves as the catalytic Proton acceptor. Lysine 133 acts as the Proton donor in catalysis. Cysteine 166 functions as the Nucleophile in the catalytic mechanism.

The protein belongs to the carbon-nitrogen hydrolase superfamily. Aliphatic amidase family.

The catalysed reaction is formamide + H2O = formate + NH4(+). Its function is as follows. Is an aliphatic amidase with a restricted substrate specificity, as it only hydrolyzes formamide. This is Formamidase from Helicobacter pylori (strain J99 / ATCC 700824) (Campylobacter pylori J99).